Consider the following 1392-residue polypeptide: ATP-dependent helicase/nuclease subunit A (1392 aa).

Residues 4–595 form the UvrD-like helicase ATP-binding domain; it reads FKPTPAQSKA…IVLGENFRSM (592 aa). Residue 25–32 coordinates ATP; that stretch reads ASAGSGKT. Residues 623 to 929 form the UvrD-like helicase C-terminal domain; sequence AHLKYAATYY…NVMTIHGSKG (307 aa).

The protein belongs to the helicase family. AddA subfamily. As to quaternary structure, heterodimer of AddA and AddB/RexB. It depends on Mg(2+) as a cofactor.

The catalysed reaction is Couples ATP hydrolysis with the unwinding of duplex DNA by translocating in the 3'-5' direction.. It catalyses the reaction ATP + H2O = ADP + phosphate + H(+). The heterodimer acts as both an ATP-dependent DNA helicase and an ATP-dependent, dual-direction single-stranded exonuclease. Recognizes the chi site generating a DNA molecule suitable for the initiation of homologous recombination. The AddA nuclease domain is required for chi fragment generation; this subunit has the helicase and 3' -&gt; 5' nuclease activities. The sequence is that of ATP-dependent helicase/nuclease subunit A from Limosilactobacillus reuteri subsp. reuteri (strain JCM 1112) (Lactobacillus reuteri).